Reading from the N-terminus, the 231-residue chain is Two-component response regulator ARR3 (231 aa).

A Response regulatory domain is found at 34–161; the sequence is HVLAVDDSLV…DVKRLRSYLT (128 aa). Position 94 is a 4-aspartylphosphate (aspartate 94). Residues 170–231 are disordered; it reads GNKRKLTTPP…DSPMRSPGLA (62 aa). Low complexity predominate over residues 185-199; it reads SATSSMESSDSTVES. Residues 210 to 221 show a composition bias toward polar residues; the sequence is LTMSPESATSLV.

Belongs to the ARR family. Type-A subfamily. Two-component system major event consists of a His-to-Asp phosphorelay between a sensor histidine kinase (HK) and a response regulator (RR). In plants, the His-to-Asp phosphorelay involves an additional intermediate named Histidine-containing phosphotransfer protein (HPt). This multistep phosphorelay consists of a His-Asp-His-Asp sequential transfer of a phosphate group between first a His and an Asp of the HK protein, followed by the transfer to a conserved His of the HPt protein and finally the transfer to an Asp in the receiver domain of the RR protein. As to expression, predominantly expressed in roots.

Its subcellular location is the nucleus. In terms of biological role, functions as a response regulator involved in His-to-Asp phosphorelay signal transduction system. Phosphorylation of the Asp residue in the receiver domain activates the ability of the protein to promote the transcription of target genes. Type-A response regulators seem to act as negative regulators of the cytokinin signaling. The polypeptide is Two-component response regulator ARR3 (ARR3) (Arabidopsis thaliana (Mouse-ear cress)).